We begin with the raw amino-acid sequence, 187 residues long: Ribosome-recycling factor (187 aa).

Belongs to the RRF family.

Its subcellular location is the cytoplasm. Responsible for the release of ribosomes from messenger RNA at the termination of protein biosynthesis. May increase the efficiency of translation by recycling ribosomes from one round of translation to another. This Methylorubrum populi (strain ATCC BAA-705 / NCIMB 13946 / BJ001) (Methylobacterium populi) protein is Ribosome-recycling factor.